Consider the following 346-residue polypeptide: 4-hydroxy-3-methylbut-2-enyl diphosphate reductase (346 aa).

Cysteine 19 contributes to the [4Fe-4S] cluster binding site. 2 residues coordinate (2E)-4-hydroxy-3-methylbut-2-enyl diphosphate: histidine 48 and histidine 84. Dimethylallyl diphosphate is bound by residues histidine 48 and histidine 84. 2 residues coordinate isopentenyl diphosphate: histidine 48 and histidine 84. [4Fe-4S] cluster is bound at residue cysteine 106. A (2E)-4-hydroxy-3-methylbut-2-enyl diphosphate-binding site is contributed by histidine 134. Histidine 134 is a dimethylallyl diphosphate binding site. Histidine 134 serves as a coordination point for isopentenyl diphosphate. Glutamate 136 (proton donor) is an active-site residue. Threonine 175 is a binding site for (2E)-4-hydroxy-3-methylbut-2-enyl diphosphate. Cysteine 205 lines the [4Fe-4S] cluster pocket. Residues serine 233, serine 234, asparagine 235, and serine 278 each contribute to the (2E)-4-hydroxy-3-methylbut-2-enyl diphosphate site. Dimethylallyl diphosphate contacts are provided by serine 233, serine 234, asparagine 235, and serine 278. Isopentenyl diphosphate-binding residues include serine 233, serine 234, asparagine 235, and serine 278.

This sequence belongs to the IspH family. [4Fe-4S] cluster serves as cofactor.

It carries out the reaction isopentenyl diphosphate + 2 oxidized [2Fe-2S]-[ferredoxin] + H2O = (2E)-4-hydroxy-3-methylbut-2-enyl diphosphate + 2 reduced [2Fe-2S]-[ferredoxin] + 2 H(+). The catalysed reaction is dimethylallyl diphosphate + 2 oxidized [2Fe-2S]-[ferredoxin] + H2O = (2E)-4-hydroxy-3-methylbut-2-enyl diphosphate + 2 reduced [2Fe-2S]-[ferredoxin] + 2 H(+). It participates in isoprenoid biosynthesis; dimethylallyl diphosphate biosynthesis; dimethylallyl diphosphate from (2E)-4-hydroxy-3-methylbutenyl diphosphate: step 1/1. Its pathway is isoprenoid biosynthesis; isopentenyl diphosphate biosynthesis via DXP pathway; isopentenyl diphosphate from 1-deoxy-D-xylulose 5-phosphate: step 6/6. Functionally, catalyzes the conversion of 1-hydroxy-2-methyl-2-(E)-butenyl 4-diphosphate (HMBPP) into a mixture of isopentenyl diphosphate (IPP) and dimethylallyl diphosphate (DMAPP). Acts in the terminal step of the DOXP/MEP pathway for isoprenoid precursor biosynthesis. This Brucella melitensis biotype 1 (strain ATCC 23456 / CCUG 17765 / NCTC 10094 / 16M) protein is 4-hydroxy-3-methylbut-2-enyl diphosphate reductase.